A 168-amino-acid polypeptide reads, in one-letter code: Small ribosomal subunit protein uS9 (168 aa).

The span at 1–11 (MAQNEELTTEA) shows a compositional bias: low complexity. Positions 1 to 36 (MAQNEELTTEAVEAEENPTSYTSESSAAEAAPKKER) are disordered.

It belongs to the universal ribosomal protein uS9 family.

The sequence is that of Small ribosomal subunit protein uS9 from Pseudarthrobacter chlorophenolicus (strain ATCC 700700 / DSM 12829 / CIP 107037 / JCM 12360 / KCTC 9906 / NCIMB 13794 / A6) (Arthrobacter chlorophenolicus).